The sequence spans 355 residues: Uroporphyrinogen decarboxylase (355 aa).

Substrate contacts are provided by residues 27-31 (RQAGR), Phe-46, Asp-77, Tyr-154, Ser-209, and His-327.

This sequence belongs to the uroporphyrinogen decarboxylase family. In terms of assembly, homodimer.

It is found in the cytoplasm. The enzyme catalyses uroporphyrinogen III + 4 H(+) = coproporphyrinogen III + 4 CO2. It functions in the pathway porphyrin-containing compound metabolism; protoporphyrin-IX biosynthesis; coproporphyrinogen-III from 5-aminolevulinate: step 4/4. Catalyzes the decarboxylation of four acetate groups of uroporphyrinogen-III to yield coproporphyrinogen-III. This Nitrosomonas europaea (strain ATCC 19718 / CIP 103999 / KCTC 2705 / NBRC 14298) protein is Uroporphyrinogen decarboxylase.